A 489-amino-acid polypeptide reads, in one-letter code: Rhamnulokinase (489 aa).

An ATP-binding site is contributed by 13–17; that stretch reads ASSGR. The cysteines at positions 68 and 222 are disulfide-linked. Substrate is bound by residues G83 and 236–238; that span reads HDT. D237 functions as the Proton acceptor in the catalytic mechanism. T259 is a binding site for ATP. Residue N296 coordinates substrate. Q304 contacts ATP. C353 and C370 are joined by a disulfide. G402 contributes to the ATP binding site. C413 and C417 are disulfide-bonded.

It belongs to the rhamnulokinase family. Mg(2+) is required as a cofactor.

The catalysed reaction is L-rhamnulose + ATP = L-rhamnulose 1-phosphate + ADP + H(+). It functions in the pathway carbohydrate degradation; L-rhamnose degradation; glycerone phosphate from L-rhamnose: step 2/3. Its function is as follows. Involved in the catabolism of L-rhamnose (6-deoxy-L-mannose). Catalyzes the transfer of the gamma-phosphate group from ATP to the 1-hydroxyl group of L-rhamnulose to yield L-rhamnulose 1-phosphate. This is Rhamnulokinase from Salmonella heidelberg (strain SL476).